The following is a 326-amino-acid chain: Regulation of nuclear pre-mRNA domain-containing protein 1B (326 aa).

S2 is modified (N-acetylserine). Residues 2–133 (SSFSESALEK…QLKLSMEDSK (132 aa)) form the CID domain. The disordered stretch occupies residues 127–149 (LSMEDSKSPPPKATEEKKSLKRT). The segment covering 128 to 144 (SMEDSKSPPPKATEEKK) has biased composition (basic and acidic residues). Residues S132 and S134 each carry the phosphoserine modification. Y161 bears the Phosphotyrosine mark. 2 positions are modified to phosphoserine: S166 and S299.

Belongs to the UPF0400 (RTT103) family. As to quaternary structure, homodimer. May form a heterodimer with RPRD1A. Associates with RPAP2. Associates with the RNA polymerase II complex. As to expression, preferentially expressed in a range of tumor tissues including colon, lung, liver, breast, prostate, stomach, uterine endometrium and cervical cancers with higher levels in tumors than in adjacent non-tumor tissue (at protein level).

It localises to the nucleus. In terms of biological role, interacts with phosphorylated C-terminal heptapeptide repeat domain (CTD) of the largest RNA polymerase II subunit POLR2A, and participates in dephosphorylation of the CTD by RPAP2. Transcriptional regulator which enhances expression of CCND1. Promotes binding of RNA polymerase II to the CCDN1 promoter and to the termination region before the poly-A site but decreases its binding after the poly-A site. Prevents RNA polymerase II from reading through the 3' end termination site and may allow it to be recruited back to the promoter through promotion of the formation of a chromatin loop. Also enhances the transcription of a number of other cell cycle-related genes including CDK2, CDK4, CDK6 and cyclin-E but not CDKN1A, CDKN1B or cyclin-A. Promotes cell proliferation. The polypeptide is Regulation of nuclear pre-mRNA domain-containing protein 1B (RPRD1B) (Homo sapiens (Human)).